The chain runs to 77 residues: Large ribosomal subunit protein bL31 (77 aa).

It belongs to the bacterial ribosomal protein bL31 family. Type A subfamily. As to quaternary structure, part of the 50S ribosomal subunit.

Its function is as follows. Binds the 23S rRNA. The chain is Large ribosomal subunit protein bL31 from Synechococcus elongatus (strain ATCC 33912 / PCC 7942 / FACHB-805) (Anacystis nidulans R2).